The following is a 219-amino-acid chain: UPF0502 protein Ppro_2903 (219 aa).

The protein belongs to the UPF0502 family.

This Pelobacter propionicus (strain DSM 2379 / NBRC 103807 / OttBd1) protein is UPF0502 protein Ppro_2903.